A 407-amino-acid chain; its full sequence is MQTPGVLLLILGLLDASSSALIRIPLRKFTSIRRTMTEVGGSVEDLILKGPITKYSMQSSPRTKEPVSELLKNYLDAQYYGEIGIGTPPQCFTVVFDTGSSNLWVPSIHCKLLDIACWVHHKYNSDKSSTYVKNGTSFDIHYGSGSLSGYLSQDTVSVPCKSDLGGIKVEKQIFGEATKQPGVVFIAAKFDGILGMGYPFISVNKVLPVFDNLMKQKLVEKNIFSFYLNRDPTGQPGGELMLGGTDSRYYHGELSYLNVTRKAYWQVHMDQLEVGSELTLCKGGCEAIVDTGTSLLVGPVDEVKELQKAIGAVPLIQGEYMIPCEKVSSLPIITFKLGGQNYELHPEKYILKVSQAGKTICLSGFMGMDIPPPSGPLWILGDVFIGCYYTVFDREYNRVGFAKAATL.

An N-terminal signal peptide occupies residues 1-20 (MQTPGVLLLILGLLDASSSA). Positions 21–64 (LIRIPLRKFTSIRRTMTEVGGSVEDLILKGPITKYSMQSSPRTK) are cleaved as a propeptide — activation peptide. A Peptidase A1 domain is found at 79 to 402 (YYGEIGIGTP…DREYNRVGFA (324 aa)). Disulfide bonds link Cys91/Cys160 and Cys110/Cys117. The active site involves Asp97. N-linked (GlcNAc...) asparagine glycosylation is found at Asn134 and Asn258. An intrachain disulfide couples Cys281 to Cys285. Asp290 is a catalytic residue. A disulfide bridge connects residues Cys324 and Cys361.

It belongs to the peptidase A1 family. In terms of assembly, occurs as a mixture of both a single chain form and two types of two chain (light and heavy) forms. Interacts with ADAM30; this leads to activation of CTSD. Post-translationally, N- and O-glycosylated. Undergoes proteolytic cleavage and activation by ADAM30.

It localises to the lysosome. The protein resides in the melanosome. It is found in the secreted. Its subcellular location is the extracellular space. It carries out the reaction Specificity similar to, but narrower than, that of pepsin A. Does not cleave the 4-Gln-|-His-5 bond in B chain of insulin.. In terms of biological role, acid protease active in intracellular protein breakdown. Plays a role in APP processing following cleavage and activation by ADAM30 which leads to APP degradation. The protein is Cathepsin D (Ctsd) of Rattus norvegicus (Rat).